A 620-amino-acid polypeptide reads, in one-letter code: Arginine--tRNA ligase (620 aa).

The 'HIGH' region motif lies at 147-157; that stretch reads ANPTGPIHIGG.

The protein belongs to the class-I aminoacyl-tRNA synthetase family. Monomer.

The protein localises to the cytoplasm. It catalyses the reaction tRNA(Arg) + L-arginine + ATP = L-arginyl-tRNA(Arg) + AMP + diphosphate. This Bifidobacterium longum (strain NCC 2705) protein is Arginine--tRNA ligase.